The sequence spans 71 residues: Sperm-associated antigen 11A (71 aa).

The first 19 residues, 1–19 (MIPRLLPFFASLLFAALLF), serve as a signal peptide directing secretion. Cystine bridges form between Cys-32/Cys-61, Cys-39/Cys-54, and Cys-44/Cys-62.

It belongs to the beta-defensin family.

Its subcellular location is the secreted. In terms of biological role, has antimicrobial activity against E.coli. Plays a role in the defense response in the male reproductive tract, contributing to sperm maturation, storage and protection. The protein is Sperm-associated antigen 11A of Mus musculus (Mouse).